The primary structure comprises 509 residues: MDIRAAEISAILKEQIKNFGKEAEVSEVGQVLSVGDGIARVYGLDNVQAGEMVEFPGGIRGMALNLESDNVGVVIFGADRDIKEGDVVKRTGAIVDVPVGPELLGRVVDALGNPIDGKGPIKAKERRRVDVKAPGIIPRKSVHEPMSTGLKAIDALIPVGRGQRELVIGDRQTGKTAIILDTFLNQKPIHDNGPDKDKLYCVYVAVGQKRSTVAQFVKVLEERGALEYSIVVAATASDPAPMQYLAPFAGCAMGEYFRDNGQHALIGYDDLSKQAVAYRQMSLLLRRPPGREAYPGDVFYLHSRLLERAAKLNDENGAGSLTALPVIETQGNDVSAFIPTNVISITDGQIFLETNLFYQGIRPAVNVGLSVSRVGSSAQIKAMKQVAGSIKGELAQYREMAAFAQFGSDLDAATQRLLNRGARLTELLKQPQFSPLKTEEQVAVIYAGVNGYLDKLAVNQVGKFEEGLLASLRTEHKDVLEGICNEKALTDDLKAKLKAAIDAFAKSFA.

169-176 provides a ligand contact to ATP; that stretch reads GDRQTGKT.

It belongs to the ATPase alpha/beta chains family. F-type ATPases have 2 components, CF(1) - the catalytic core - and CF(0) - the membrane proton channel. CF(1) has five subunits: alpha(3), beta(3), gamma(1), delta(1), epsilon(1). CF(0) has three main subunits: a(1), b(2) and c(9-12). The alpha and beta chains form an alternating ring which encloses part of the gamma chain. CF(1) is attached to CF(0) by a central stalk formed by the gamma and epsilon chains, while a peripheral stalk is formed by the delta and b chains.

It localises to the cell inner membrane. It catalyses the reaction ATP + H2O + 4 H(+)(in) = ADP + phosphate + 5 H(+)(out). In terms of biological role, produces ATP from ADP in the presence of a proton gradient across the membrane. The alpha chain is a regulatory subunit. The polypeptide is ATP synthase subunit alpha (Brucella melitensis biotype 1 (strain ATCC 23456 / CCUG 17765 / NCTC 10094 / 16M)).